The chain runs to 434 residues: Fez family zinc finger protein 2 (434 aa).

An Engrailed homology 1 repressor motif is present at residues 27-42 (SLAFSIERIMAKTSEP). C2H2-type zinc fingers lie at residues 253–275 (FTCE…MPVH), 281–303 (FVCK…KIIH), 309–331 (HKCN…IRIH), 337–359 (FVCE…KLTH), 365–387 (YKCS…MHTH), and 393–416 (FTCA…RKLH).

Belongs to the krueppel C2H2-type zinc-finger protein family.

The protein resides in the nucleus. Functionally, transcription repressor. Component of the regulatory cascade that controls the development of dopaminergic (DA) and serotonergic (5HT) neurons. The sequence is that of Fez family zinc finger protein 2 (fezf2) from Xenopus laevis (African clawed frog).